The sequence spans 132 residues: Nickel-responsive regulator (132 aa).

Ni(2+) contacts are provided by His-76, His-87, His-89, and Cys-95.

This sequence belongs to the transcriptional regulatory CopG/NikR family. Homotetramer. Ni(2+) is required as a cofactor.

Its function is as follows. Transcriptional repressor of the nikABCDE operon. Is active in the presence of excessive concentrations of intracellular nickel. The chain is Nickel-responsive regulator from Klebsiella pneumoniae subsp. pneumoniae (strain ATCC 700721 / MGH 78578).